The sequence spans 163 residues: MTSADRRRDAVARIIRARRIGTQEELLAALERAGFRATQATLSRDLARLGARRVSGPEGAVYELGADGADGADGGLAALRGLVSSIAANASMVVIRTHPGSAPAIARAIDLAQPPEVLGTIAGDDTIFVAPAGELRPRRLAARLAELLGTPSALAGEGGDRTH.

Belongs to the ArgR family.

It localises to the cytoplasm. The protein operates within amino-acid biosynthesis; L-arginine biosynthesis [regulation]. Functionally, regulates arginine biosynthesis genes. The polypeptide is Arginine repressor (Anaeromyxobacter dehalogenans (strain 2CP-C)).